Consider the following 398-residue polypeptide: Ubiquitin carboxyl-terminal hydrolase 17-like protein 6 (398 aa).

The region spanning 80–375 (AGLQNMGNTC…QAYVLFYIQK (296 aa)) is the USP domain. The active-site Nucleophile is the C89. Catalysis depends on H334, which acts as the Proton acceptor.

This sequence belongs to the peptidase C19 family. USP17 subfamily.

The protein localises to the nucleus. It is found in the cytoplasm. It catalyses the reaction Thiol-dependent hydrolysis of ester, thioester, amide, peptide and isopeptide bonds formed by the C-terminal Gly of ubiquitin (a 76-residue protein attached to proteins as an intracellular targeting signal).. Deubiquitinating enzyme that removes conjugated ubiquitin from specific proteins to regulate different cellular processes that may include cell proliferation, progression through the cell cycle, cell migration, and the cellular response to viral infection. Seems to be non-functional in the regulation of apoptosis. This is Ubiquitin carboxyl-terminal hydrolase 17-like protein 6 (USP17L6P) from Homo sapiens (Human).